A 597-amino-acid chain; its full sequence is Sialic acid-binding Ig-like lectin 12 (597 aa).

The first 20 residues, 1–20, serve as a signal peptide directing secretion; sequence MLLLLLLLLLPPLLCGRVGA. 2 consecutive Ig-like V-type domains span residues 21 to 144 and 145 to 271; these read KEQK…VNVT and ASQD…VHVT. Over 21 to 483 the chain is Extracellular; sequence KEQKDYLLTM…RPISGVTLGA (463 aa). Cys46 and Cys106 are joined by a disulfide. Asn142, Asn181, Asn232, and Asn292 each carry an N-linked (GlcNAc...) asparagine glycan. 3 cysteine pairs are disulfide-bonded: Cys168-Cys301, Cys173-Cys233, and Cys295-Cys344. Residues 277–360 form the Ig-like C2-type 1 domain; sequence PTFSIPGTLE…AGVTTTRAVR (84 aa). N-linked (GlcNAc...) asparagine glycans are attached at residues Asn362, Asn369, and Asn387. One can recognise an Ig-like C2-type 2 domain in the interval 367–464; the sequence is PQNLTMTVFQ…GSQHISLSLS (98 aa). Cysteines 403 and 448 form a disulfide. The helical transmembrane segment at 484 to 504 threads the bilayer; that stretch reads VGGAGATALVFLSFCIIFVVV. Topologically, residues 505-597 are cytoplasmic; that stretch reads RSCRKKSARP…YEYSEINILK (93 aa). Residues 514–558 form a disordered region; it reads PAVGVGDTGMEDTNAVRGSASQGPLIESPADDSPPHHAPPALATP. The short motif at 565–570 is the ITIM motif element; that stretch reads IQYASL. Phosphotyrosine occurs at positions 567 and 590. Positions 588-593 match the SLAM-like motif motif; it reads YEYSEI.

It belongs to the immunoglobulin superfamily. SIGLEC (sialic acid binding Ig-like lectin) family.

Its subcellular location is the membrane. Its function is as follows. Putative adhesion molecule that mediates sialic-acid dependent binding to cells. The sialic acid recognition site may be masked by cis interactions with sialic acids on the same cell surface. This Pan troglodytes (Chimpanzee) protein is Sialic acid-binding Ig-like lectin 12 (SIGLEC12).